The chain runs to 283 residues: Pantothenate synthetase (283 aa).

30 to 37 provides a ligand contact to ATP; sequence MGYFHDGH. The Proton donor role is filled by histidine 37. Glutamine 61 serves as a coordination point for (R)-pantoate. Glutamine 61 is a beta-alanine binding site. Residue 147-150 participates in ATP binding; that stretch reads GSKD. Glutamine 153 serves as a coordination point for (R)-pantoate. ATP contacts are provided by residues valine 176 and 184 to 187; that span reads MSSR.

The protein belongs to the pantothenate synthetase family. As to quaternary structure, homodimer.

Its subcellular location is the cytoplasm. The enzyme catalyses (R)-pantoate + beta-alanine + ATP = (R)-pantothenate + AMP + diphosphate + H(+). It participates in cofactor biosynthesis; (R)-pantothenate biosynthesis; (R)-pantothenate from (R)-pantoate and beta-alanine: step 1/1. Catalyzes the condensation of pantoate with beta-alanine in an ATP-dependent reaction via a pantoyl-adenylate intermediate. The sequence is that of Pantothenate synthetase from Desulforapulum autotrophicum (strain ATCC 43914 / DSM 3382 / VKM B-1955 / HRM2) (Desulfobacterium autotrophicum).